The sequence spans 409 residues: Ligand-gated cation channel ZACN (409 aa).

Positions 1–18 (MAPRLLLLLLAFLRLGTT) are cleaved as a signal peptide. The Extracellular portion of the chain corresponds to 19 to 233 (GPLVQGRGFR…LRLQNTALKA (215 aa)). N-linked (GlcNAc...) asparagine glycans are attached at residues Asn55 and Asn99. Cys157 and Cys171 are disulfide-bonded. The helical transmembrane segment at 234–254 (IIALLVPGEALLLADMCGGLL) threads the bilayer. The Cytoplasmic segment spans residues 255-265 (PLRATERIAYK). The helical transmembrane segment at 266 to 286 (VTLLLGYLVFHSSLVQALPSS) threads the bilayer. The Extracellular portion of the chain corresponds to 287 to 296 (SSCNPLLIYY). The helical transmembrane segment at 297–317 (FTVLLLLLFISTMETVLLAAL) threads the bilayer. Over 318-365 (QARGHLSARSSPIPTPRGEQQDHGDLGPHPEEAPGVKESRSWAEAADH) the chain is Cytoplasmic. The tract at residues 325–354 (ARSSPIPTPRGEQQDHGDLGPHPEEAPGVK) is disordered. Over residues 336 to 354 (EQQDHGDLGPHPEEAPGVK) the composition is skewed to basic and acidic residues. A helical transmembrane segment spans residues 366-386 (IFFLVYVVGVVCSQFFFIGFW). The Extracellular portion of the chain corresponds to 387–409 (MWATCKSDPAPGEAIPHGGQPRL).

This sequence belongs to the ligand-gated ion channel (TC 1.A.9) family. Glycosylated.

Its subcellular location is the cell membrane. The enzyme catalyses Na(+)(in) = Na(+)(out). It carries out the reaction K(+)(in) = K(+)(out). Ligand-gated cation channel that allows the movement of sodium and potassium monoatomic cations across cell membranes when activated by zinc (Zn2+), copper (Cu2+), and changes in pH. Could also transport cesium. In Canis lupus familiaris (Dog), this protein is Ligand-gated cation channel ZACN.